Reading from the N-terminus, the 932-residue chain is DNA mismatch repair protein MutS (932 aa).

ATP is bound at residue 615–622 (GPNMAGKS).

It belongs to the DNA mismatch repair MutS family.

Its function is as follows. This protein is involved in the repair of mismatches in DNA. It is possible that it carries out the mismatch recognition step. This protein has a weak ATPase activity. The polypeptide is DNA mismatch repair protein MutS (Clostridium botulinum (strain Langeland / NCTC 10281 / Type F)).